A 207-amino-acid chain; its full sequence is ATFDVVNQCTFTVWAGASPGGGKQLDQGQTWTITVAPGSTKARIWGRTGCNFDANGQGKCQTGDCNGLLQCQGYGSPPNTLAEFSLNQPNNLDYVDISLVDGFNIPMDFSPAAAGVCKDIRCATDITAQCPAELQAPGGCNNPCTVYKTNEYCCTNGQGTCGPTALSKFFKDRCPDAYSYPQDDPTSLFTCPAGTNYKVVFCPNLDA.

8 disulfides stabilise this stretch: C9–C202, C50–C60, C65–C71, C117–C191, C122–C174, C130–C140, C144–C153, and C154–C161.

Belongs to the thaumatin family. As to quaternary structure, monomer. Not glycosylated.

It is found in the secreted. Acidic thaumatin-like protein. Exhibits weak beta-1,3-glucanase activity with laminarin as substrate. In Manilkara zapota (Sapodilla plum), this protein is Thaumatin-like protein 1 (TLP1).